The chain runs to 600 residues: Zinc metalloproteinase-disintegrin-like cobrin (600 aa).

An N-terminal signal peptide occupies residues 1–8 (MIQLSWSS). Positions 9–179 (IILESGNVND…DEPIKKTSLL (171 aa)) are excised as a propeptide. The region spanning 193-388 (KYIEFYMVVD…DRPQCILNKP (196 aa)) is the Peptidase M12B domain. Ca(2+) is bound by residues E196 and D280. Cystine bridges form between C304–C383, C344–C367, and C346–C351. Zn(2+) contacts are provided by H329, H333, and H339. Residues C383, N386, I398, N401, F403, E405, E408, and D411 each contribute to the Ca(2+) site. One can recognise a Disintegrin domain in the interval 396-482 (PPICGNYFVE…ECPTDVFQRN (87 aa)). Cystine bridges form between C399–C428, C410–C423, C412–C418, C422–C445, C436–C442, C441–C467, C454–C474, C461–C492, C486–C497, C504–C554, C519–C562, C532–C542, C549–C588, and C582–C593. N424 carries an N-linked (GlcNAc...) asparagine glycan. The D/ECD-tripeptide signature appears at 460-462 (DCD). 5 residues coordinate Ca(2+): D462, L463, E465, D477, and V478.

It belongs to the venom metalloproteinase (M12B) family. P-III subfamily. P-IIIa sub-subfamily. In terms of assembly, monomer. Zn(2+) serves as cofactor. Expressed by the venom gland.

Its subcellular location is the secreted. Snake venom zinc metalloproteinase that may cleave complement protein C3 into C3c-like (C3o). This chain is Zinc metalloproteinase-disintegrin-like cobrin, found in Naja kaouthia (Monocled cobra).